The sequence spans 442 residues: Mitochondrial distribution and morphology protein 12 (442 aa).

Residues 1–442 (MSIDINWEAA…VYPSFWTFLV (442 aa)) enclose the SMP-LTD domain. Disordered stretches follow at residues 67–125 (NDFY…RVGY), 202–277 (LSLA…RRMR), and 364–387 (EGYH…RRSN). A compositionally biased stretch (acidic residues) spans 69–80 (FYEEDEDGEDLS). Over residues 90–100 (PSSQGLSQSTP) the composition is skewed to polar residues. Over residues 101 to 112 (NGDAGSSNSSSN) the composition is skewed to low complexity. Residues 213–222 (RQRERARSSD) show a composition bias toward basic and acidic residues. A compositionally biased stretch (low complexity) spans 227-245 (SPQSRSRPSTSSTRQRTST).

The protein belongs to the MDM12 family. Component of the ER-mitochondria encounter structure (ERMES) or MDM complex, composed of MMM1, MDM10, MDM12 and MDM34. An MMM1 homodimer associates with one molecule of MDM12 on each side in a pairwise head-to-tail manner, and the SMP-LTD domains of MMM1 and MDM12 generate a continuous hydrophobic tunnel for phospholipid trafficking.

It localises to the mitochondrion outer membrane. The protein localises to the endoplasmic reticulum membrane. Component of the ERMES/MDM complex, which serves as a molecular tether to connect the endoplasmic reticulum (ER) and mitochondria. Components of this complex are involved in the control of mitochondrial shape and protein biogenesis, and function in nonvesicular lipid trafficking between the ER and mitochondria. MDM12 is required for the interaction of the ER-resident membrane protein MMM1 and the outer mitochondrial membrane-resident beta-barrel protein MDM10. The MDM12-MMM1 subcomplex functions in the major beta-barrel assembly pathway that is responsible for biogenesis of all mitochondrial outer membrane beta-barrel proteins, and acts in a late step after the SAM complex. The MDM10-MDM12-MMM1 subcomplex further acts in the TOM40-specific pathway after the action of the MDM12-MMM1 complex. Essential for establishing and maintaining the structure of mitochondria and maintenance of mtDNA nucleoids. This chain is Mitochondrial distribution and morphology protein 12, found in Arthroderma otae (strain ATCC MYA-4605 / CBS 113480) (Microsporum canis).